The following is a 460-amino-acid chain: Exodeoxyribonuclease 7 large subunit (460 aa).

A disordered region spans residues 438–460 (ARVEKVNREEEKQSGSQKNGTRD). The segment covering 439-450 (RVEKVNREEEKQ) has biased composition (basic and acidic residues). The segment covering 451-460 (SGSQKNGTRD) has biased composition (polar residues).

Belongs to the XseA family. In terms of assembly, heterooligomer composed of large and small subunits.

It is found in the cytoplasm. The catalysed reaction is Exonucleolytic cleavage in either 5'- to 3'- or 3'- to 5'-direction to yield nucleoside 5'-phosphates.. Its function is as follows. Bidirectionally degrades single-stranded DNA into large acid-insoluble oligonucleotides, which are then degraded further into small acid-soluble oligonucleotides. This chain is Exodeoxyribonuclease 7 large subunit, found in Brevibacillus brevis (strain 47 / JCM 6285 / NBRC 100599).